Here is a 937-residue protein sequence, read N- to C-terminus: MTSAEIRQSFLDFFARQGHTIVPSSSLLPDSPGLLFTNAGMNQFVPIFLGDRAPDVSKWAGARPAKDTRAADTQKCIRAGGKHNDLEDVGFDTYHHTMFEMLGNWSFGDYFKKESITWGWELITKVWGIPAKRLFATVYSPDKSKNDPSDFDQEAYDIWAGVFKKEGLDPAVHIVHGNKKDNFWMMGDTGPCGPCSEIHFNLLPSDDEVEGRKLVNAGVPRCIEIWNHVFIQFNANADGTFSPLAAKHVDTGMGFERVAGIYATTKGFKDFSRDPSNYNADVFAPLFAKIEELSKKTYNGTVPTRREGLGEQENIDIAFRVLADHARCVSCAIADNILPGNEGRNYVIRRILRRGILYGKKLNLATGFFEQLVAPVVESLGAVFPELKERQDIIRRVIRSEEESFGRTLEKGLQLFNEGAKLLLDAHPIKGQADVPGVGTITNIGGVTRFLGGKFVFRLYDTYGFPVDMTQLLATERGLAVNMVEFASEMQQQQDRSRAAQKKEVIVAATEGDNTEAAQPTKFIGYDRLTADAQVLDVVKTDKDLFLVFDQTPFYAEMGGQTGDHGVVKIDGQTFAILATVKDKAGRFLHKLAPACAADVARLNPVGKKAALGVSPLARRAISRHHSAEHLVHWALRKTLGTHVRQAGTSKTKERMRFDFTHFEALTPEQIAEVERLVNSKILSNDKVEAYETEFDKKPEGTLAFFGEKYGKIVRVVDIGGYSRELCGGTHVSTTSEIGLFKIVAEMAIAAGTRRLEAVAGQAAYDFVEEHETALKAVTHKLNAGPQDVAQKLDSLLAHQKELEKKLKAYEQKAAAGLADELAAKATARDGLKFVTATVSIDNQDALRSLGSQVLHKLGEGVVTLGAALGDRASLVVYCSPAAIKAGHQAGKIVGELSTKIGGKGGGKPDFAMGGGKDPSKLADVLKQSAPGVICSW.

His-626, His-630, Cys-727, and His-731 together coordinate Zn(2+).

Belongs to the class-II aminoacyl-tRNA synthetase family. It depends on Zn(2+) as a cofactor.

It is found in the cytoplasm. The catalysed reaction is tRNA(Ala) + L-alanine + ATP = L-alanyl-tRNA(Ala) + AMP + diphosphate. Its function is as follows. Catalyzes the attachment of alanine to tRNA(Ala) in a two-step reaction: alanine is first activated by ATP to form Ala-AMP and then transferred to the acceptor end of tRNA(Ala). Also edits incorrectly charged Ser-tRNA(Ala) and Gly-tRNA(Ala) via its editing domain. This Opitutus terrae (strain DSM 11246 / JCM 15787 / PB90-1) protein is Alanine--tRNA ligase.